Consider the following 476-residue polypeptide: Glycogen synthase (476 aa).

K15 is a binding site for ADP-alpha-D-glucose.

It belongs to the glycosyltransferase 1 family. Bacterial/plant glycogen synthase subfamily.

The enzyme catalyses [(1-&gt;4)-alpha-D-glucosyl](n) + ADP-alpha-D-glucose = [(1-&gt;4)-alpha-D-glucosyl](n+1) + ADP + H(+). Its pathway is glycan biosynthesis; glycogen biosynthesis. Its function is as follows. Synthesizes alpha-1,4-glucan chains using ADP-glucose. The polypeptide is Glycogen synthase (Streptococcus equi subsp. equi (strain 4047)).